A 349-amino-acid polypeptide reads, in one-letter code: GDSL esterase/lipase At2g19050 (349 aa).

The first 23 residues, 1-23 (MAEAIFKALLLVIATTAFATTEA), serve as a signal peptide directing secretion. Ser38 functions as the Nucleophile in the catalytic mechanism. N-linked (GlcNAc...) asparagine glycosylation is present at Asn49. Residues Asp316 and His319 contribute to the active site.

This sequence belongs to the 'GDSL' lipolytic enzyme family.

It localises to the secreted. The sequence is that of GDSL esterase/lipase At2g19050 from Arabidopsis thaliana (Mouse-ear cress).